The primary structure comprises 118 residues: Small ribosomal subunit protein uS10 (118 aa).

The residue at position 37 (Ser-37) is a Phosphoserine.

It belongs to the universal ribosomal protein uS10 family. In terms of assembly, component of the small ribosomal subunit (SSU). Mature yeast ribosomes consist of a small (40S) and a large (60S) subunit. The 40S small subunit contains 1 molecule of ribosomal RNA (18S rRNA) and at least 33 different proteins. The large 60S subunit contains 3 rRNA molecules (25S, 5.8S and 5S rRNA) and at least 46 different proteins.

It localises to the cytoplasm. Component of the ribosome, a large ribonucleoprotein complex responsible for the synthesis of proteins in the cell. The small ribosomal subunit (SSU) binds messenger RNAs (mRNAs) and translates the encoded message by selecting cognate aminoacyl-transfer RNA (tRNA) molecules. The large subunit (LSU) contains the ribosomal catalytic site termed the peptidyl transferase center (PTC), which catalyzes the formation of peptide bonds, thereby polymerizing the amino acids delivered by tRNAs into a polypeptide chain. The nascent polypeptides leave the ribosome through a tunnel in the LSU and interact with protein factors that function in enzymatic processing, targeting, and the membrane insertion of nascent chains at the exit of the ribosomal tunnel. The sequence is that of Small ribosomal subunit protein uS10 (rps20) from Schizosaccharomyces pombe (strain 972 / ATCC 24843) (Fission yeast).